Reading from the N-terminus, the 193-residue chain is Leucyl/phenylalanyl-tRNA--protein transferase (193 aa).

This sequence belongs to the L/F-transferase family.

Its subcellular location is the cytoplasm. The enzyme catalyses N-terminal L-lysyl-[protein] + L-leucyl-tRNA(Leu) = N-terminal L-leucyl-L-lysyl-[protein] + tRNA(Leu) + H(+). It carries out the reaction N-terminal L-arginyl-[protein] + L-leucyl-tRNA(Leu) = N-terminal L-leucyl-L-arginyl-[protein] + tRNA(Leu) + H(+). It catalyses the reaction L-phenylalanyl-tRNA(Phe) + an N-terminal L-alpha-aminoacyl-[protein] = an N-terminal L-phenylalanyl-L-alpha-aminoacyl-[protein] + tRNA(Phe). Functionally, functions in the N-end rule pathway of protein degradation where it conjugates Leu, Phe and, less efficiently, Met from aminoacyl-tRNAs to the N-termini of proteins containing an N-terminal arginine or lysine. In Gloeobacter violaceus (strain ATCC 29082 / PCC 7421), this protein is Leucyl/phenylalanyl-tRNA--protein transferase.